Here is a 1179-residue protein sequence, read N- to C-terminus: ATP-dependent helicase/deoxyribonuclease subunit B (1179 aa).

Belongs to the helicase family. AddB/RexB type 2 subfamily. In terms of assembly, heterodimer of AddA and RexB. It depends on Mg(2+) as a cofactor.

Its function is as follows. The heterodimer acts as both an ATP-dependent DNA helicase and an ATP-dependent, dual-direction single-stranded exonuclease. Recognizes the chi site generating a DNA molecule suitable for the initiation of homologous recombination. This subunit has 5' -&gt; 3' nuclease activity but not helicase activity. The polypeptide is ATP-dependent helicase/deoxyribonuclease subunit B (Lacticaseibacillus casei (strain BL23) (Lactobacillus casei)).